Here is a 299-residue protein sequence, read N- to C-terminus: Putative ammonium transporter 4 member 1 (299 aa).

The next 5 membrane-spanning stretches (helical) occupy residues 16–36 (AWPL…LVIL), 59–79 (VLLT…GFNG), 104–124 (LLVW…ISAV), 158–178 (VLHT…LLLL), and 218–238 (AGIA…CLAV).

This sequence belongs to the ammonia transporter channel (TC 1.A.11.2) family.

Its subcellular location is the membrane. The polypeptide is Putative ammonium transporter 4 member 1 (AMT4-1) (Oryza sativa subsp. japonica (Rice)).